The primary structure comprises 507 residues: Transcription factor NIGTH1 (507 aa).

Disordered stretches follow at residues 139–172 (ASAA…TALD) and 238–268 (SREA…RKAR). The span at 152–161 (PKEHSEHHPL) shows a compositional bias: basic and acidic residues. Residues 263 to 323 (PHRKARRCWS…HLQKYRLHTR (61 aa)) enclose the HTH myb-type domain. A DNA-binding region (H-T-H motif) is located at residues 294–319 (PKQIRELMKVDGLTNDEVKSHLQKYR). Positions 402-507 (AVAPPPPLPP…TTTSAGAINY (106 aa)) are disordered. Residues 412-433 (QQQLAPPYSAKSSASARLGSPD) show a composition bias toward low complexity. Residues 437-446 (RGSGGGGGAA) are compositionally biased toward gly residues. Positions 456 to 476 (ESIEEEGEGEEREDDDDDDEM) are enriched in acidic residues.

Interacts with ACA5.

Its subcellular location is the nucleus. In terms of biological role, probable transcription factor that may play a role in regulatory networks controlling development and metabolism. The polypeptide is Transcription factor NIGTH1 (Oryza sativa subsp. japonica (Rice)).